The primary structure comprises 73 residues: U-scoloptoxin(15)-Sa1a (73 aa).

Residues methionine 1–alanine 20 form the signal peptide.

It belongs to the scoloptoxin-15 family. In terms of processing, contains 2 disulfide bonds. As to expression, expressed by the venom gland.

The protein resides in the secreted. The protein is U-scoloptoxin(15)-Sa1a of Scolopendra alternans (Florida Keys giant centipede).